A 255-amino-acid chain; its full sequence is 5-oxoprolinase subunit A (255 aa).

It belongs to the LamB/PxpA family. In terms of assembly, forms a complex composed of PxpA, PxpB and PxpC.

The enzyme catalyses 5-oxo-L-proline + ATP + 2 H2O = L-glutamate + ADP + phosphate + H(+). Catalyzes the cleavage of 5-oxoproline to form L-glutamate coupled to the hydrolysis of ATP to ADP and inorganic phosphate. This Rhodopseudomonas palustris (strain BisB18) protein is 5-oxoprolinase subunit A.